The chain runs to 502 residues: Neuronal acetylcholine receptor subunit alpha-7 (502 aa).

Residues 1–22 (MCGRRGGIWLALAAALLHVSLQ) form the signal peptide. At 23–233 (GEFQRRLYKE…VTMRRRTLYY (211 aa)) the chain is on the extracellular side. Residues R42 and V44 each contribute to the Ca(2+) site. N46, N90, and N133 each carry an N-linked (GlcNAc...) asparagine glycan. C150 and C164 form a disulfide bridge. Ca(2+) is bound by residues S172 and Y210. C212 and C213 form a disulfide bridge. 3 helical membrane passes run 234–254 (GLNL…VFLL), 262–282 (ISLG…VAEI), and 295–315 (QYFA…VIVL). An essential for TMEM35A/NACHO-mediated proper subunit assembly and trafficking to cell membrane region spans residues 260-267 (EKISLGIT). Topologically, residues 316–469 (RYHHHDPDGG…WKFAACVVDR (154 aa)) are cytoplasmic. A helical transmembrane segment spans residues 470–490 (LCLMAFSVFTIICTIGILMSA).

This sequence belongs to the ligand-gated ion channel (TC 1.A.9) family. Acetylcholine receptor (TC 1.A.9.1) subfamily. Alpha-7/CHRNA7 sub-subfamily. As to quaternary structure, homopentamer. Can also form heteropentamers with CHRNB2, mainly found in basal forebrain cholinergic neurons. Interacts with RIC3; which is required for proper folding and assembly. Interacts with LYPD6. Interacts with CANX. In terms of processing, glycosylations at Asn-46, Asn-90 and Asn-133 are essential for TMEM35A/NACHO-mediated proper subunit assembly and trafficking to the cell membrane. Higly expressed in brain. ALso expressed in immune cells sucha as macrophages.

The protein localises to the postsynaptic cell membrane. The protein resides in the cell membrane. It catalyses the reaction K(+)(in) = K(+)(out). The catalysed reaction is Na(+)(in) = Na(+)(out). It carries out the reaction Ca(2+)(in) = Ca(2+)(out). The enzyme catalyses choline(out) = choline(in). It catalyses the reaction NH4(+)(in) = NH4(+)(out). The catalysed reaction is L-arginine(in) = L-arginine(out). It carries out the reaction guanidine(out) = guanidine(in). Activated by a myriad of ligands such as acetylcholine, cytisine, nicotine, choline and epibatidine. Oligomeric amyloid-beta protein 42 activates specifially CHRNA7:CHRNB2 nAchRs. Activity is modulated by positive allosteric modulators (PAMs), such as flavonoids, with a wide range of chemical diversity, pharmacological sensitivity and efficacy. AChR activity is inhibited by the antagonists alpha-conotoxons RgIA, ImI and ImII, small disulfide-constrained peptides from cone snails. Component of neuronal acetylcholine receptors (nAChRs) that function as pentameric, ligand-gated cation channels with high calcium permeability among other activities. nAChRs are excitatory neurotrasnmitter receptors formed by a collection of nAChR subunits known to mediate synaptic transmission in the nervous system and the neuromuscular junction. Each nAchR subunit confers differential attributes to channel properties, including activation, deactivation and desensitization kinetics, pH sensitivity, cation permeability, and binding to allosteric modulators. CHRNA7 forms homopentameric neuronal acetylcholine receptors abundantly expressed in the central nervous system, characterized by fast desensitization and high calcium permeability. Also forms heteropentamers with CHRNB2, mainly expressed in basal forebrain cholinergic neurons. Involved in the modulation of calcium-dependent signaling pathways and influences the release of neurotransmitters, including dopamine, glutamate and GABA. Involved in the modulation of calcium-dependent signaling pathways and influences the release of neurotransmitters, including dopamine, glutamate and GABA. Also expressed in non-neuronal cells such as immune cells like lymphocytes, monocytes and macrophages. In T cells, activation induces metabotropic signaling that results in an increase of intracellular Ca2+ concentrations, independent of ionotropic receptor functions. In macrophages, required for acetylcholine-mediated inhibition of TNF and other inflammatory cytokine release. Once activated by acetylcholine, nicotine or other agonists, selectively inhibits production of pro-inflammatory cytokines while leaving anti-inflammatory cytokines undisturbed. Stimulates the cholinergic anti-inflammatory pathway, controlling inflammation by inhibiting NFKB nuclear translocation and activating the JAK2-STAT3 pathway, independently of ion channel activity. Also expressed in the urothelium where it modulates reflex bladder activity by increasing intracellular calcium through internal stores and decreasing basal ATP release. The chain is Neuronal acetylcholine receptor subunit alpha-7 (Chrna7) from Mus musculus (Mouse).